The primary structure comprises 291 residues: Formamidopyrimidine-DNA glycosylase (291 aa).

The active-site Schiff-base intermediate with DNA is the Pro2. Glu3 acts as the Proton donor in catalysis. Catalysis depends on Lys58, which acts as the Proton donor; for beta-elimination activity. Residues His104, Arg123, and Lys166 each coordinate DNA. The FPG-type zinc finger occupies 257 to 291 (KVYDREGKPCPTCGGTVQRFVQNGRSTFWCPKCQK). Catalysis depends on Arg281, which acts as the Proton donor; for delta-elimination activity.

This sequence belongs to the FPG family. As to quaternary structure, monomer. It depends on Zn(2+) as a cofactor.

The enzyme catalyses Hydrolysis of DNA containing ring-opened 7-methylguanine residues, releasing 2,6-diamino-4-hydroxy-5-(N-methyl)formamidopyrimidine.. It carries out the reaction 2'-deoxyribonucleotide-(2'-deoxyribose 5'-phosphate)-2'-deoxyribonucleotide-DNA = a 3'-end 2'-deoxyribonucleotide-(2,3-dehydro-2,3-deoxyribose 5'-phosphate)-DNA + a 5'-end 5'-phospho-2'-deoxyribonucleoside-DNA + H(+). Its function is as follows. Involved in base excision repair of DNA damaged by oxidation or by mutagenic agents. Acts as a DNA glycosylase that recognizes and removes damaged bases. Has a preference for oxidized purines, such as 7,8-dihydro-8-oxoguanine (8-oxoG). Has AP (apurinic/apyrimidinic) lyase activity and introduces nicks in the DNA strand. Cleaves the DNA backbone by beta-delta elimination to generate a single-strand break at the site of the removed base with both 3'- and 5'-phosphates. The protein is Formamidopyrimidine-DNA glycosylase of Rhodopseudomonas palustris (strain TIE-1).